A 510-amino-acid chain; its full sequence is Pentatricopeptide repeat-containing protein At1g71060, mitochondrial (510 aa).

The transit peptide at 1–14 directs the protein to the mitochondrion; the sequence is MVFSRFFRVTGVNL. PPR repeat units lie at residues 127–157, 161–195, 196–230, 231–265, 266–300, 301–335, 336–370, 371–401, 403–437, and 438–472; these read TTSN…MKAK, SKET…GFKM, ESSD…RFEP, DIKS…GFEP, DVVA…NCKP, SPHI…GFPL, EAPT…GVGP, NART…MSCE, TVST…GVLP, and GMHM…GIRP.

The protein belongs to the PPR family. P subfamily.

The protein localises to the mitochondrion. This Arabidopsis thaliana (Mouse-ear cress) protein is Pentatricopeptide repeat-containing protein At1g71060, mitochondrial.